The sequence spans 257 residues: Imidazole glycerol phosphate synthase subunit HisF (257 aa).

Catalysis depends on residues Asp12 and Asp131.

This sequence belongs to the HisA/HisF family. In terms of assembly, heterodimer of HisH and HisF.

It localises to the cytoplasm. The catalysed reaction is 5-[(5-phospho-1-deoxy-D-ribulos-1-ylimino)methylamino]-1-(5-phospho-beta-D-ribosyl)imidazole-4-carboxamide + L-glutamine = D-erythro-1-(imidazol-4-yl)glycerol 3-phosphate + 5-amino-1-(5-phospho-beta-D-ribosyl)imidazole-4-carboxamide + L-glutamate + H(+). It participates in amino-acid biosynthesis; L-histidine biosynthesis; L-histidine from 5-phospho-alpha-D-ribose 1-diphosphate: step 5/9. Its function is as follows. IGPS catalyzes the conversion of PRFAR and glutamine to IGP, AICAR and glutamate. The HisF subunit catalyzes the cyclization activity that produces IGP and AICAR from PRFAR using the ammonia provided by the HisH subunit. The chain is Imidazole glycerol phosphate synthase subunit HisF from Rhodococcus erythropolis (strain PR4 / NBRC 100887).